Reading from the N-terminus, the 136-residue chain is Ciliary microtubule inner protein 1 (136 aa).

The protein localises to the cell projection. It is found in the cilium. In Mus musculus (Mouse), this protein is Ciliary microtubule inner protein 1 (Cimip1).